A 798-amino-acid polypeptide reads, in one-letter code: General transcription and DNA repair factor IIH helicase/translocase subunit XPB (798 aa).

Disordered regions lie at residues 1–62 and 235–254; these read MGPP…EQIN and PPGA…GADG. The short motif at 6–22 is the Nuclear localization signal element; the sequence is KSRKDRSGGDKFGKKRR. Positions 10–25 are enriched in basic and acidic residues; sequence DRSGGDKFGKKRRAED. Positions 33–42 are enriched in acidic residues; it reads DDNDSLDATE. The Helicase ATP-binding domain occupies 343 to 504; sequence MFGNGRARSG…DLNFLIGPKL (162 aa). 360 to 367 contacts ATP; the sequence is AGKSLVGV. The short motif at 457–460 is the DEVH box element; it reads DEVH. One can recognise a Helicase C-terminal domain in the interval 558-713; sequence RSCQFLIKYH…KVITHLKGMD (156 aa). Residues 746–765 are disordered; sequence LPGEPGYRPSGSGGAVRRVG.

Belongs to the helicase family. RAD25/XPB subfamily. In terms of assembly, component of the 7-subunit TFIIH core complex composed of haywire/XPB/ERCC3, XPD/ERCC2, GTF2H1, GTF2H2, GTF2H3, GTF2H4 and GTF2H5, which is active in NER. The core complex associates with the 3-subunit CDK-activating kinase (CAK) module composed of CCNH/cyclin H, CDK7 and MNAT1 to form the 10-subunit holoenzyme (holo-TFIIH) active in transcription. Interacts with PUF60. Interacts with ATF7IP. Interacts with Epstein-Barr virus EBNA2.

It is found in the nucleus. The enzyme catalyses Couples ATP hydrolysis with the unwinding of duplex DNA by translocating in the 3'-5' direction.. It catalyses the reaction ATP + H2O = ADP + phosphate + H(+). Its function is as follows. ATP-dependent 3'-5' DNA helicase/translocase; binds dsDNA rather than ssDNA, unzipping it in a translocase rather than classical helicase activity. Component of the general transcription and DNA repair factor IIH (TFIIH) core complex. When complexed to CDK-activating kinase (CAK), involved in RNA transcription by RNA polymerase II. The ATPase activity of XPB/ERCC3, but not its helicase activity, is required for DNA opening; it may wrap around the damaged DNA wedging it open, causing localized melting and twisting that allows XPD/ERCC2 helicase to anchor. The ATP-dependent helicase activity of XPB/ERCC3 may be required for promoter escape. Also involved in transcription-coupled nucleotide excision repair (NER) of damaged DNA. In NER, TFIIH acts by opening DNA around the lesion to allow the excision of the damaged oligonucleotide and its replacement by a new DNA fragment. The structure of the TFIIH transcription complex differs from the NER-TFIIH complex; large movements by XPD/ERCC2 and XPB/ERCC3 are stabilized by XPA. In Drosophila melanogaster (Fruit fly), this protein is General transcription and DNA repair factor IIH helicase/translocase subunit XPB (hay).